The chain runs to 433 residues: 4-hydroxy-3-methylbut-2-en-1-yl diphosphate synthase (flavodoxin) (433 aa).

Positions 1–13 (MNKPETVTENSLA) are enriched in polar residues. Residues 1–23 (MNKPETVTENSLASDVAGPAPRH) are disordered. Cys-314, Cys-317, Cys-360, and Glu-367 together coordinate [4Fe-4S] cluster.

It belongs to the IspG family. It depends on [4Fe-4S] cluster as a cofactor.

It catalyses the reaction (2E)-4-hydroxy-3-methylbut-2-enyl diphosphate + oxidized [flavodoxin] + H2O + 2 H(+) = 2-C-methyl-D-erythritol 2,4-cyclic diphosphate + reduced [flavodoxin]. Its pathway is isoprenoid biosynthesis; isopentenyl diphosphate biosynthesis via DXP pathway; isopentenyl diphosphate from 1-deoxy-D-xylulose 5-phosphate: step 5/6. Functionally, converts 2C-methyl-D-erythritol 2,4-cyclodiphosphate (ME-2,4cPP) into 1-hydroxy-2-methyl-2-(E)-butenyl 4-diphosphate. The chain is 4-hydroxy-3-methylbut-2-en-1-yl diphosphate synthase (flavodoxin) from Bradyrhizobium sp. (strain ORS 278).